The chain runs to 156 residues: Small ribosomal subunit protein uS7c (156 aa).

It belongs to the universal ribosomal protein uS7 family. Part of the 30S ribosomal subunit.

Its subcellular location is the plastid. It is found in the chloroplast. One of the primary rRNA binding proteins, it binds directly to 16S rRNA where it nucleates assembly of the head domain of the 30S subunit. This Pyropia yezoensis (Susabi-nori) protein is Small ribosomal subunit protein uS7c (rps7).